The sequence spans 460 residues: 3'3'-cGAMP-specific phosphodiesterase 3 (460 aa).

Residues 28–189 (PPEHCIRCCW…IPLFSRIALL (162 aa)) enclose the HD domain. The region spanning 260–455 (DDAYLECIVT…LPDEYTQLPH (196 aa)) is the HD-GYP domain. The a divalent metal cation site is built by H317 and D318. K321 functions as the Proton donor in the catalytic mechanism. The a divalent metal cation site is built by H346, H370, H371, and D399.

Monomer. Mn(2+) serves as cofactor.

It carries out the reaction 3',3'-cGAMP + H2O = 5'-pApG-3' + H(+). Functionally, phosphodiesterase (PDE) that catalyzes the hydrolysis of 3'3'-cyclic GMP-AMP (3'3'-cGAMP), leading to linear 5'-pApG. Counteracts the function of the 3'3'-cGAMP synthase DncV, and is involved in the modulation of intracellular 3'3'-cGAMP levels. Enhances bacterial chemotaxis and inhibits intestinal colonization in vivo. Thus exerts a crucial role in regulating bacterial infectivity through catalyzing 3'3'-cGAMP degradation. Is specific for 3'3'-cGAMP since it cannot degrade other cGAMP linkage isomers (3'2'-, 2'3'-, and 2'2'-cGAMPs); is also able to hydrolyze c-di-GMP but not c-di-AMP. This Vibrio cholerae serotype O1 (strain ATCC 39315 / El Tor Inaba N16961) protein is 3'3'-cGAMP-specific phosphodiesterase 3.